A 305-amino-acid chain; its full sequence is UDP-3-O-acyl-N-acetylglucosamine deacetylase (305 aa).

3 residues coordinate Zn(2+): H79, H238, and D242. The active-site Proton donor is the H265.

The protein belongs to the LpxC family. Zn(2+) serves as cofactor.

It carries out the reaction a UDP-3-O-[(3R)-3-hydroxyacyl]-N-acetyl-alpha-D-glucosamine + H2O = a UDP-3-O-[(3R)-3-hydroxyacyl]-alpha-D-glucosamine + acetate. Its pathway is glycolipid biosynthesis; lipid IV(A) biosynthesis; lipid IV(A) from (3R)-3-hydroxytetradecanoyl-[acyl-carrier-protein] and UDP-N-acetyl-alpha-D-glucosamine: step 2/6. Its function is as follows. Catalyzes the hydrolysis of UDP-3-O-myristoyl-N-acetylglucosamine to form UDP-3-O-myristoylglucosamine and acetate, the committed step in lipid A biosynthesis. In Vibrio campbellii (strain ATCC BAA-1116), this protein is UDP-3-O-acyl-N-acetylglucosamine deacetylase.